Here is a 465-residue protein sequence, read N- to C-terminus: Glutamate--tRNA ligase (465 aa).

The short motif at 5–15 (PSPTGMFHVGG) is the 'HIGH' region element. Residues cysteine 96, cysteine 98, cysteine 118, and aspartate 120 each coordinate Zn(2+). The short motif at 228–232 (KLSKR) is the 'KMSKS' region element. ATP is bound at residue lysine 231.

The protein belongs to the class-I aminoacyl-tRNA synthetase family. Glutamate--tRNA ligase type 1 subfamily. Monomer. Requires Zn(2+) as cofactor.

Its subcellular location is the cytoplasm. The catalysed reaction is tRNA(Glu) + L-glutamate + ATP = L-glutamyl-tRNA(Glu) + AMP + diphosphate. Functionally, catalyzes the attachment of glutamate to tRNA(Glu) in a two-step reaction: glutamate is first activated by ATP to form Glu-AMP and then transferred to the acceptor end of tRNA(Glu). The polypeptide is Glutamate--tRNA ligase (Salinispora tropica (strain ATCC BAA-916 / DSM 44818 / JCM 13857 / NBRC 105044 / CNB-440)).